The primary structure comprises 347 residues: Ornithine carbamoyltransferase (347 aa).

Residues 56–59 (STRT), glutamine 83, arginine 107, and 134–137 (HPTQ) contribute to the carbamoyl phosphate site. Residues asparagine 168, aspartate 232, and 236 to 237 (SM) each bind L-ornithine. Residues 274–275 (CL) and arginine 320 contribute to the carbamoyl phosphate site.

It belongs to the aspartate/ornithine carbamoyltransferase superfamily. OTCase family.

The protein resides in the cytoplasm. It carries out the reaction carbamoyl phosphate + L-ornithine = L-citrulline + phosphate + H(+). In terms of biological role, reversibly catalyzes the transfer of the carbamoyl group from carbamoyl phosphate (CP) to the N(epsilon) atom of ornithine (ORN) to produce L-citrulline. This Blochmanniella floridana protein is Ornithine carbamoyltransferase.